We begin with the raw amino-acid sequence, 365 residues long: H-2 class I histocompatibility antigen, D-D alpha chain (365 aa).

Positions M1–A24 are cleaved as a signal peptide. An alpha-1 region spans residues G25 to G114. The Extracellular portion of the chain corresponds to G25–T311. N-linked (GlcNAc...) asparagine glycosylation is present at N110. The interval G115 to T206 is alpha-2. C125 and C188 are joined by a disulfide. N-linked (GlcNAc...) asparagine glycosylation occurs at N200. Residues D207–W298 are alpha-3. The Ig-like C1-type domain maps to P209–R297. C227 and C283 are joined by a disulfide. The interval G299 to T311 is connecting peptide. The helical transmembrane segment at V312–M334 threads the bilayer. Residues K335–V365 lie on the Cytoplasmic side of the membrane. Residues K343–V365 are disordered. Residues S356 and S359 each carry the phosphoserine modification.

It belongs to the MHC class I family. In terms of assembly, heterodimer of an alpha chain and a beta chain (beta-2-microglobulin).

It localises to the membrane. Involved in the presentation of foreign antigens to the immune system. This chain is H-2 class I histocompatibility antigen, D-D alpha chain (H2-D1), found in Mus musculus (Mouse).